A 91-amino-acid chain; its full sequence is Small ribosomal subunit protein uS19 (91 aa).

This sequence belongs to the universal ribosomal protein uS19 family.

In terms of biological role, protein S19 forms a complex with S13 that binds strongly to the 16S ribosomal RNA. The sequence is that of Small ribosomal subunit protein uS19 from Pseudoalteromonas atlantica (strain T6c / ATCC BAA-1087).